A 140-amino-acid chain; its full sequence is Large ribosomal subunit protein uL11 (140 aa).

It belongs to the universal ribosomal protein uL11 family. Part of the ribosomal stalk of the 50S ribosomal subunit. Interacts with L10 and the large rRNA to form the base of the stalk. L10 forms an elongated spine to which L12 dimers bind in a sequential fashion forming a multimeric L10(L12)X complex. Post-translationally, one or more lysine residues are methylated.

Functionally, forms part of the ribosomal stalk which helps the ribosome interact with GTP-bound translation factors. The polypeptide is Large ribosomal subunit protein uL11 (Heliobacterium modesticaldum (strain ATCC 51547 / Ice1)).